A 174-amino-acid polypeptide reads, in one-letter code: Ubiquitin-fold modifier-conjugating enzyme 1 (174 aa).

Cysteine 119 functions as the Glycyl thioester intermediate in the catalytic mechanism.

It belongs to the ubiquitin-conjugating enzyme family. UFC1 subfamily.

E2-like enzyme which forms an intermediate with UFM1 via a thioester linkage. This is Ubiquitin-fold modifier-conjugating enzyme 1 from Arabidopsis thaliana (Mouse-ear cress).